The sequence spans 326 residues: Biotin synthase (326 aa).

The Radical SAM core domain maps to 41 to 271; it reads YHVQLASLLS…EARVRLSAGR (231 aa). [4Fe-4S] cluster is bound by residues cysteine 56, cysteine 60, and cysteine 63. [2Fe-2S] cluster is bound by residues cysteine 102, cysteine 134, cysteine 194, and arginine 266.

It belongs to the radical SAM superfamily. Biotin synthase family. In terms of assembly, homodimer. [4Fe-4S] cluster serves as cofactor. It depends on [2Fe-2S] cluster as a cofactor.

The enzyme catalyses (4R,5S)-dethiobiotin + (sulfur carrier)-SH + 2 reduced [2Fe-2S]-[ferredoxin] + 2 S-adenosyl-L-methionine = (sulfur carrier)-H + biotin + 2 5'-deoxyadenosine + 2 L-methionine + 2 oxidized [2Fe-2S]-[ferredoxin]. It participates in cofactor biosynthesis; biotin biosynthesis; biotin from 7,8-diaminononanoate: step 2/2. Catalyzes the conversion of dethiobiotin (DTB) to biotin by the insertion of a sulfur atom into dethiobiotin via a radical-based mechanism. The polypeptide is Biotin synthase (Synechococcus sp. (strain RCC307)).